We begin with the raw amino-acid sequence, 693 residues long: UvrABC system protein B (693 aa).

A Helicase ATP-binding domain is found at 35 to 188; the sequence is ERINNGEKDV…DQLLRQFVGI (154 aa). 48–55 is an ATP binding site; that stretch reads GATGTGKS. Residues 101–124 carry the Beta-hairpin motif; it reads YYDYYQPEAYVPQTDTFIEKDSSV. A Helicase C-terminal domain is found at 438–600; it reads QIDDLLGEIR…VDPTPLRKRI (163 aa). The disordered stretch occupies residues 612 to 634; the sequence is ADTKSLLESAGKGRSRGKAPVPV. One can recognise a UVR domain in the interval 648-683; sequence VDLIEQLTAQMHSAAGELQFELAARLRDEVGDLKKE.

This sequence belongs to the UvrB family. In terms of assembly, forms a heterotetramer with UvrA during the search for lesions. Interacts with UvrC in an incision complex.

The protein localises to the cytoplasm. Its function is as follows. The UvrABC repair system catalyzes the recognition and processing of DNA lesions. A damage recognition complex composed of 2 UvrA and 2 UvrB subunits scans DNA for abnormalities. Upon binding of the UvrA(2)B(2) complex to a putative damaged site, the DNA wraps around one UvrB monomer. DNA wrap is dependent on ATP binding by UvrB and probably causes local melting of the DNA helix, facilitating insertion of UvrB beta-hairpin between the DNA strands. Then UvrB probes one DNA strand for the presence of a lesion. If a lesion is found the UvrA subunits dissociate and the UvrB-DNA preincision complex is formed. This complex is subsequently bound by UvrC and the second UvrB is released. If no lesion is found, the DNA wraps around the other UvrB subunit that will check the other stand for damage. The chain is UvrABC system protein B from Renibacterium salmoninarum (strain ATCC 33209 / DSM 20767 / JCM 11484 / NBRC 15589 / NCIMB 2235).